Reading from the N-terminus, the 88-residue chain is PTS system cellobiose-specific EIIB component (88 aa).

One can recognise a PTS EIIB type-3 domain in the interval 3–88; that stretch reads KKRIYLFCSA…IDTLLYGKVD (86 aa). Cys10 functions as the Phosphocysteine intermediate in the catalytic mechanism. Cys10 bears the Phosphocysteine; by EIIA mark.

It localises to the cytoplasm. The catalysed reaction is D-cellobiose(out) + N(pros)-phospho-L-histidyl-[protein] = 6-phospho-beta-D-glucosyl-(1-&gt;4)-D-glucose(in) + L-histidyl-[protein]. Its function is as follows. The phosphoenolpyruvate-dependent sugar phosphotransferase system (sugar PTS), a major carbohydrate active transport system, catalyzes the phosphorylation of incoming sugar substrates concomitantly with their translocation across the cell membrane. The enzyme II CelABD PTS system is involved in cellobiose transport. This Aeromonas hydrophila protein is PTS system cellobiose-specific EIIB component.